We begin with the raw amino-acid sequence, 100 residues long: Large ribosomal subunit protein uL23c (100 aa).

It belongs to the universal ribosomal protein uL23 family. As to quaternary structure, part of the 50S ribosomal subunit.

It is found in the plastid. The protein localises to the chloroplast. Its function is as follows. Binds to 23S rRNA. The polypeptide is Large ribosomal subunit protein uL23c (rpl23) (Euglena gracilis).